The sequence spans 623 residues: Keratin, type I cytoskeletal 9 (623 aa).

Residues 1–13 are compositionally biased toward low complexity; that stretch reads MSCRQFSSSYLSR. The disordered stretch occupies residues 1–25; that stretch reads MSCRQFSSSYLSRSGGGGGGGLGSG. The segment at 1–152 is head; it reads MSCRQFSSSY…GGDGGILTAN (152 aa). Phosphoserine occurs at positions 14 and 57. The span at 14 to 25 shows a compositional bias: gly residues; it reads SGGGGGGGLGSG. The tract at residues 153 to 188 is coil 1A; the sequence is EKSTMQELNSRLASYLDKVQALEEANNDLENKIQDW. The 313-residue stretch at 153-465 folds into the IF rod domain; the sequence is EKSTMQELNS…NLLEGGQEDF (313 aa). The segment at 189 to 207 is linker 1; that stretch reads YDKKGPAAIQKNYSPYYNT. Residues 208 to 299 are coil 1B; the sequence is IDDLKDQIVD…KNHKEEMSQL (92 aa). The linker 12 stretch occupies residues 300 to 322; it reads TGQNSGDVNVEINVAPGKDLTKT. A coil 2 region spans residues 323–461; the sequence is LNDMRQEYEQ…ETYHNLLEGG (139 aa). Disordered stretches follow at residues 462-496 and 534-623; these read QEDF…SGGS and YGGG…SSHS. The segment at 462 to 623 is tail; sequence QEDFESSGAG…GGGSGKSSHS (162 aa). Residues 471 to 496 show a composition bias toward gly residues; that stretch reads GKIGLGGRGGSGGSYGRGSRGGSGGS.

This sequence belongs to the intermediate filament family. Heterotetramer of two type I and two type II keratins. Expressed in the terminally differentiated epidermis of palms and soles.

Functionally, may serve an important special function either in the mature palmar and plantar skin tissue or in the morphogenetic program of the formation of these tissues. Plays a role in keratin filament assembly. The sequence is that of Keratin, type I cytoskeletal 9 (KRT9) from Homo sapiens (Human).